We begin with the raw amino-acid sequence, 196 residues long: MAENSAATPAAKPKRSKALKKSTDHPKYSDMILAAVQAEKSRSGSSRQSIQKYIKNHYKVGENADSQIKLSIKRLVTSGALKQTKGVGASGSFRLAKADEGKKPAKKPKKEIKKAVSPKKVAKPKKAAKSPAKAKKPKVAEKKVKKVAKKKPAPSPKKAKKTKTVKAKPVRASKVKKAKPSKPKAKASPKKSGRKK.

Disordered regions lie at residues 1–29 and 86–196; these read MAEN…PKYS and GVGA…GRKK. In terms of domain architecture, H15 spans 24 to 97; sequence DHPKYSDMIL…GASGSFRLAK (74 aa). Residues 104 to 196 show a composition bias toward basic residues; that stretch reads PAKKPKKEIK…ASPKKSGRKK (93 aa).

This sequence belongs to the histone H1/H5 family.

The protein localises to the nucleus. Its subcellular location is the chromosome. Histones H1 are necessary for the condensation of nucleosome chains into higher-order structures. The histones H1.0 are found in cells that are in terminal stages of differentiation or that have low rates of cell division. The sequence is that of Histone H1.0-B (h1-0-b) from Xenopus laevis (African clawed frog).